The chain runs to 228 residues: Cytidylate kinase (228 aa).

12–20 (GPSGSGKGT) contributes to the ATP binding site.

Belongs to the cytidylate kinase family. Type 1 subfamily.

Its subcellular location is the cytoplasm. The catalysed reaction is CMP + ATP = CDP + ADP. It catalyses the reaction dCMP + ATP = dCDP + ADP. This is Cytidylate kinase from Pseudomonas putida (strain ATCC 47054 / DSM 6125 / CFBP 8728 / NCIMB 11950 / KT2440).